A 210-amino-acid chain; its full sequence is MSNSYMPIDYVLNFSTFTLHAWNGLSLFLIISGTWFISGMCTKAKGDRLLLCWWALTGLIHIIQEGYFVFTPDLFKDKSPNFIAELWIEYNKGDSRYVSRHTSVLAIEGMAAVVMGPLSLLVVYAIVKAKSYSYILQFGVSIAQLYGACLYFLTAFLEGDNFASSPYYYYAYYVGQSSIWIIVPSLIAINFWRKMNGICQLHDKKKAKVC.

The next 5 membrane-spanning stretches (helical) occupy residues 17 to 37 (FTLH…TWFI), 50 to 70 (LLCW…YFVF), 107 to 127 (IEGM…YAIV), 135 to 155 (ILQF…FLTA), and 172 to 192 (YYVG…INFW). One can recognise an EXPERA domain in the interval 46–188 (GDRLLLCWWA…IWIIVPSLIA (143 aa)).

The protein belongs to the EBP family.

It localises to the membrane. It catalyses the reaction 7,8-epoxymelianol = isomeliandiol. The protein operates within secondary metabolite biosynthesis; terpenoid biosynthesis. Its function is as follows. Isomerase involved in the biosynthesis of limonoids and quassinoids triterpene natural products such as ailanthone, chaparrinone, glaucarubinone and amarolide, allelopathic degraded triterpene lactones inhibiting the growth of other plants, and possessing antimalarial, antifeedant, insecticidal, anti-inflammatory and anticancer activities. Catalyzes the conversion of 7,8-epoxymelianol to isomeliandiol via skeletal rearrangements. The sequence is that of Isomeliandiol synthase ISM1 from Ailanthus altissima (Tree-of-heaven).